We begin with the raw amino-acid sequence, 334 residues long: G-protein coupled receptor 12 (334 aa).

Topologically, residues 1 to 48 (MNEDPKVNLSGLPRDCIDAGAPENISAAVPSQGSVAESEPELVVNPWD) are extracellular. N-linked (GlcNAc...) asparagine glycans are attached at residues N8 and N24. A helical membrane pass occupies residues 49–69 (IVLCSSGTLICCENAVVVLII). The Cytoplasmic segment spans residues 70–78 (FHSPSLRAP). Residues 79–99 (MFLLIGSLALADLLAGLGLII) form a helical membrane-spanning segment. The Extracellular segment spans residues 100 to 113 (NFVFAYLLQSEATK). The helical transmembrane segment at 114 to 134 (LVTIGLIVASFSASVCSLLAI) threads the bilayer. Residues 135–158 (TVDRYLSLYYALTYHSERTVTFTY) are Cytoplasmic-facing. Residues 159–179 (VMLVMLWGTSICLGLLPVMGW) form a helical membrane-spanning segment. Over 180-199 (NCLRDESTCSVVRPLTKNNA) the chain is Extracellular. The chain crosses the membrane as a helical span at residues 200–220 (AILSISFLFMFALMLQLYIQI). The Cytoplasmic segment spans residues 221–252 (CKIVMRHAHQIALQHHFLATSHYVTTRKGVST). Residues 253–273 (LALILGTFAACWMPFTLYSLI) form a helical membrane-spanning segment. The Extracellular segment spans residues 274-282 (ADYTYPSIY). A helical transmembrane segment spans residues 283-303 (TYATLLPATYNSIINPVIYAF). Topologically, residues 304 to 334 (RNQEIQKALCLICCGCIPSSLSQRARSPSDV) are cytoplasmic. A lipid anchor (S-palmitoyl cysteine) is attached at C317. Phosphoserine occurs at positions 330 and 332.

This sequence belongs to the G-protein coupled receptor 1 family. In terms of tissue distribution, expressed predominantly in the forebrain and a lesser extent in the hindbrain. Lower expression in the liver.

The protein localises to the cell membrane. Functionally, receptor with constitutive G(s) signaling activity that stimulates cyclic AMP production. Promotes neurite outgrowth and blocks myelin inhibition in neurons. In Mus musculus (Mouse), this protein is G-protein coupled receptor 12 (Gpr12).